Reading from the N-terminus, the 461-residue chain is Juvenile hormone epoxide hydrolase (461 aa).

A helical transmembrane segment spans residues 4-24 (LLFIALPLLVLASIPLYLLVL). The Nucleophile role is filled by aspartate 227. The active-site Proton donor is the tyrosine 373. The active-site Proton acceptor is the histidine 430.

This sequence belongs to the peptidase S33 family. In terms of assembly, homodimer. Expressed in fat body, foregut and midgut but not in brain, subesophageal ganglia or silk gland of larvae on day 1 of fifth instar.

Its subcellular location is the microsome membrane. It is found in the endoplasmic reticulum membrane. It catalyses the reaction cis-stilbene oxide + H2O = (1R,2R)-hydrobenzoin. The catalysed reaction is 1-(4-methoxyphenyl)-N-methyl-N-[(3-methyloxetan-3-yl)methyl]methanamine + H2O = 2-{[(4-methoxybenzyl)(methyl)amino]methyl}-2-methylpropane-1,3-diol. In terms of biological role, catalyzes juvenile hormone hydrolysis. Degrades juvenile hormone III (JH III) about 3 times and 5 times slower than juvenile hormone I (JH I) and II (JH II), respectively. Degrades cis-stilbene oxide and trans-stilbene oxide about 18 and 43 times slower than JH III, respectively. This Bombyx mori (Silk moth) protein is Juvenile hormone epoxide hydrolase.